A 1010-amino-acid polypeptide reads, in one-letter code: Lysosomal alpha-mannosidase (1010 aa).

An N-terminal signal peptide occupies residues 1–22 (MVIKKLFILIFCLFLIINEING). Positions 23-40 (KKTKINDIKKSKPKLSST) are cleaved as a propeptide — pro I. Residues His51 and Asp53 each coordinate Zn(2+). A glycan (N-linked (GlcNAc...) asparagine) is linked at Asn68. 2 residues coordinate Zn(2+): Asp173 and His420. Asp173 (nucleophile) is an active-site residue. N-linked (GlcNAc...) asparagine glycosylation is found at Asn480, Asn520, Asn528, Asn539, Asn623, Asn760, Asn784, Asn828, Asn954, and Asn963. The propeptide at 508–595 (RNEPVRIPIP…GGGKINEKVS (88 aa)) is pro II.

The protein belongs to the glycosyl hydrolase 38 family. As to quaternary structure, tetramer of equimolar amounts of 60 and 58 kDa subunits. Zn(2+) serves as cofactor. First cleaved into the mature 58 kDa subunit and an intermediate 82 kDa subunit. The latter is then cleaved to its mature 60 kDa subunit form. These events occur in multiple intracellular compartments. The 60 kDa subunit may form one or more intramolecular disulfide bonds.

It is found in the lysosome. It carries out the reaction Hydrolysis of terminal, non-reducing alpha-D-mannose residues in alpha-D-mannosides.. The sequence is that of Lysosomal alpha-mannosidase (manA) from Dictyostelium discoideum (Social amoeba).